We begin with the raw amino-acid sequence, 227 residues long: YEATS domain-containing protein 4 (227 aa).

Residues 15–158 enclose the YEATS domain; the sequence is RVKGVTIVKP…AMMQQLLTTS (144 aa). A Glycyl lysine isopeptide (Lys-Gly) (interchain with G-Cter in SUMO2) cross-link involves residue K37. A diacetylated histone H3 binding region spans residues 93 to 97; sequence WGEFE. The tract at residues 163–227 is interaction with MLLT10; it reads LGAYKHETEF…LEEDDQTKDI (65 aa). Residues 168-227 form an interaction with TACC1 region; that stretch reads HETEFAELEVKTREKLEAAKKKTSFEIAELKERLKASRETINCLKNEIRKLEEDDQTKDI. Residues 178–226 adopt a coiled-coil conformation; that stretch reads KTREKLEAAKKKTSFEIAELKERLKASRETINCLKNEIRKLEEDDQTKD.

In terms of assembly, component of numerous complexes with chromatin remodeling and histone acetyltransferase activity. Component of the NuA4 histone acetyltransferase complex which contains the catalytic subunit KAT5/TIP60 and the subunits EP400, TRRAP/PAF400, BRD8/SMAP, EPC1, DMAP1/DNMAP1, RUVBL1/TIP49, RUVBL2, ING3, actin, ACTL6A/BAF53A, MORF4L1/MRG15, MORF4L2/MRGX, MRGBP, YEATS4/GAS41, VPS72/YL1 and MEAF6. The NuA4 complex interacts with MYC and the adenovirus E1A protein. Component of a NuA4-related complex which contains EP400, TRRAP/PAF400, SRCAP, BRD8/SMAP, EPC1, DMAP1/DNMAP1, RUVBL1/TIP49, RUVBL2, actin, ACTL6A/BAF53A, VPS72 and YEATS4/GAS41. Interacts with MLLT10/AF10. Also interacts with the SWI/SNF component SMARCB1/BAF47, TACC1 and TACC2, and the nuclear matrix protein NUMA1.

It localises to the nucleus. In terms of biological role, chromatin reader component of the NuA4 histone acetyltransferase (HAT) complex, a complex involved in transcriptional activation of select genes principally by acetylation of nucleosomal histones H4 and H2A. Specifically recognizes and binds acylated histone H3, with a preference for histone H3 diacetylated at 'Lys-18' and 'Lys-27' (H3K18ac and H3K27ac) or histone H3 diacetylated at 'Lys-14' and 'Lys-27' (H3K14ac and H3K27ac). Also able to recognize and bind crotonylated histone H3. May also recognize and bind histone H3 succinylated at 'Lys-122' (H3K122succ); additional evidences are however required to confirm this result in vivo. Plays a key role in histone variant H2AZ1/H2A.Z deposition into specific chromatin regions: recognizes and binds H3K14ac and H3K27ac on the promoters of actively transcribed genes and recruits NuA4-related complex to deposit H2AZ1/H2A.Z. H2AZ1/H2A.Z deposition is required for maintenance of embryonic stem cell. This Mus musculus (Mouse) protein is YEATS domain-containing protein 4.